Here is a 549-residue protein sequence, read N- to C-terminus: Glucose-6-phosphate isomerase (549 aa).

Catalysis depends on glutamate 355, which acts as the Proton donor. Catalysis depends on residues histidine 386 and lysine 514.

Belongs to the GPI family.

It localises to the cytoplasm. It catalyses the reaction alpha-D-glucose 6-phosphate = beta-D-fructose 6-phosphate. Its pathway is carbohydrate biosynthesis; gluconeogenesis. It functions in the pathway carbohydrate degradation; glycolysis; D-glyceraldehyde 3-phosphate and glycerone phosphate from D-glucose: step 2/4. Functionally, catalyzes the reversible isomerization of glucose-6-phosphate to fructose-6-phosphate. In Salmonella choleraesuis (strain SC-B67), this protein is Glucose-6-phosphate isomerase.